The sequence spans 821 residues: DNA gyrase subunit A (821 aa).

Residues 35 to 500 (LPDVRDGLKP…GLETIEDEDL (466 aa)) enclose the Topo IIA-type catalytic domain. The active-site O-(5'-phospho-DNA)-tyrosine intermediate is the Y123. The GyrA-box signature appears at 527–533 (QKRGGKG).

Belongs to the type II topoisomerase GyrA/ParC subunit family. In terms of assembly, heterotetramer, composed of two GyrA and two GyrB chains. In the heterotetramer, GyrA contains the active site tyrosine that forms a transient covalent intermediate with DNA, while GyrB binds cofactors and catalyzes ATP hydrolysis.

The protein localises to the cytoplasm. It catalyses the reaction ATP-dependent breakage, passage and rejoining of double-stranded DNA.. Functionally, a type II topoisomerase that negatively supercoils closed circular double-stranded (ds) DNA in an ATP-dependent manner to modulate DNA topology and maintain chromosomes in an underwound state. Negative supercoiling favors strand separation, and DNA replication, transcription, recombination and repair, all of which involve strand separation. Also able to catalyze the interconversion of other topological isomers of dsDNA rings, including catenanes and knotted rings. Type II topoisomerases break and join 2 DNA strands simultaneously in an ATP-dependent manner. This is DNA gyrase subunit A from Bacillus subtilis (strain 168).